Consider the following 189-residue polypeptide: Probable transcriptional regulator Rv1176c (189 aa).

This sequence belongs to the PadR family. In terms of assembly, homodimer.

The protein localises to the cytoplasm. Its function is as follows. Probable transcriptional regulator that may help mitigate the effect of oxidative stress and help mycobacteria survive inside macrophages. Binds to its own promoter region. The polypeptide is Probable transcriptional regulator Rv1176c (Mycobacterium tuberculosis (strain ATCC 25618 / H37Rv)).